The chain runs to 106 residues: Probable insulin-like peptide beta-type 2 (106 aa).

A signal peptide spans 1–15 (MNAIIFCLLFTTVTA). The propeptide occupies 16 to 56 (TYEVFGKGIEHRNEHLIINQLDIIPVESTPTPNRASRVQKR). 4 cysteine pairs are disulfide-bonded: Cys58–Cys86, Cys70–Cys99, Cys73–Cys100, and Cys85–Cys90.

It belongs to the insulin family.

It is found in the secreted. This chain is Probable insulin-like peptide beta-type 2 (ins-2), found in Caenorhabditis elegans.